A 465-amino-acid chain; its full sequence is ATP synthase subunit beta (465 aa).

155–162 contributes to the ATP binding site; it reads GGAGVGKT.

Belongs to the ATPase alpha/beta chains family. As to quaternary structure, F-type ATPases have 2 components, CF(1) - the catalytic core - and CF(0) - the membrane proton channel. CF(1) has five subunits: alpha(3), beta(3), gamma(1), delta(1), epsilon(1). CF(0) has three main subunits: a(1), b(2) and c(9-12). The alpha and beta chains form an alternating ring which encloses part of the gamma chain. CF(1) is attached to CF(0) by a central stalk formed by the gamma and epsilon chains, while a peripheral stalk is formed by the delta and b chains.

Its subcellular location is the cell membrane. It carries out the reaction ATP + H2O + 4 H(+)(in) = ADP + phosphate + 5 H(+)(out). In terms of biological role, produces ATP from ADP in the presence of a proton gradient across the membrane. The catalytic sites are hosted primarily by the beta subunits. The protein is ATP synthase subunit beta of Buchnera aphidicola subsp. Acyrthosiphon pisum (strain 5A).